Here is a 234-residue protein sequence, read N- to C-terminus: L-cystine transport system permease protein TcyB (234 aa).

5 helical membrane-spanning segments follow: residues 8-28 (ALTL…WPIL), 36-56 (IPLT…TALA), 78-98 (TPLL…NVTL), 100-120 (PFPS…SEII), and 199-219 (ILVI…LLSL). The ABC transmembrane type-1 domain occupies 32 to 221 (IYYTIPLTIL…IICFLLSLVQ (190 aa)).

The protein belongs to the binding-protein-dependent transport system permease family. In terms of assembly, the complex is composed of two ATP-binding proteins (TcyC), two transmembrane proteins (TcyB) and a solute-binding protein (TcyA).

The protein resides in the cell membrane. Its function is as follows. Part of the ABC transporter complex TcyABC involved in L-cystine import. Probably responsible for the translocation of the substrate across the membrane. The sequence is that of L-cystine transport system permease protein TcyB (tcyB) from Bacillus subtilis (strain 168).